Consider the following 515-residue polypeptide: MDEFHRCGKEDSFWQQCFLYPLFFQEDLYAISHDHYLDVSSSSRPMEHLSSNDQLSFLTVKRLIGQIRQQNHSIVLFVNCDPNPLADRKKSFYSESVLEALTLVLEVPFSIWSKSSVEGMNECKSFRSIHSIFPFLEDKFPHSNSILDARIPYSIHPEILVRTFRRWIRDAPSLHPLRSVLYDYRNSPENLQRSIIVVPRVNTRFFLFLLNYYVCECESILFSRLKRSSHSRSLTHGSFPQRTHFHRKIKHIIIFSRRNSLKTIWSLKDPKIHYVRYGERPIIAIKGAHLLVKKCRYYLLIFRQFYFHLWSEPYRVCSHQLSKNCSSSPGYFLRVRMNPIFVRTKMLDELFIADLITNEMDPIVPIVPIIGLLATEKFCDISGRPISKLSWTSLTDDDILDRFDQIWRNLFHYYSGSFDRDGLYRIKYILSLSCAKTLACKHKSTIRVVRKELGPELFKKSFSKEREFDSLPFSSKAAARSQRERIWHSDIPQINPLANSWQKIQDLKIENLFDQ.

This sequence belongs to the intron maturase 2 family. MatK subfamily.

The protein resides in the plastid. The protein localises to the chloroplast. Its function is as follows. Usually encoded in the trnK tRNA gene intron. Probably assists in splicing its own and other chloroplast group II introns. The protein is Maturase K of Pinus pinea (Italian stone pine).